The primary structure comprises 182 residues: Cytidylate kinase (182 aa).

7-15 (GPPGSGKSS) contacts ATP.

This sequence belongs to the cytidylate kinase family. Type 2 subfamily.

The protein resides in the cytoplasm. The catalysed reaction is CMP + ATP = CDP + ADP. The enzyme catalyses dCMP + ATP = dCDP + ADP. This Sulfolobus acidocaldarius (strain ATCC 33909 / DSM 639 / JCM 8929 / NBRC 15157 / NCIMB 11770) protein is Cytidylate kinase (cmk).